Reading from the N-terminus, the 381-residue chain is MKYASFIAAAAAALASAVSAAGVSGSAEGFAKGVTGGGSATPVYPSTTDELVSYLGDSEARVIILTKTFDFTNTEGTETSSGCAPWGTASGCQLAINKDNWCTNYEPNAPTVSSITYNKAGVLGITVNSNKSIVGQGSAGVIKGRGLRIVSGAKNVIIQNIAITDINPKYVWGGDAITLNEADLVWIDHVTTARIARQHIVLGTQADNRVTISNSLIDGRTDYSATCNGHHYWGVYLDGSNDMVTMMGNYFYYTSGRMPKVQGNTLLHAVNNYFHNIEGHAFEIGSGGYVLAEGNAFQNVDAPVESPISGQLFSAPDATTNEQCKSVFGRACQINAFGSSGSFSQADTAVISKFSGKNIATAHLAQNIPKWVMANAGQGKL.

Residues 1–20 (MKYASFIAAAAAALASAVSA) form the signal peptide. Disulfide bonds link Cys-83–Cys-102 and Cys-92–Cys-227. Residue Asn-130 is glycosylated (N-linked (GlcNAc...) asparagine). Arg-257 is a catalytic residue. Cys-324 and Cys-332 are joined by a disulfide.

It belongs to the polysaccharide lyase 1 family.

It localises to the secreted. It catalyses the reaction Eliminative cleavage of (1-&gt;4)-alpha-D-galacturonan methyl ester to give oligosaccharides with 4-deoxy-6-O-methyl-alpha-D-galact-4-enuronosyl groups at their non-reducing ends.. Functionally, pectinolytic enzymes consist of four classes of enzymes: pectin lyase, polygalacturonase, pectin methylesterase and rhamnogalacturonase. Among pectinolytic enzymes, pectin lyase is the most important in depolymerization of pectin, since it cleaves internal glycosidic bonds of highly methylated pectins. The polypeptide is Pectin lyase 1 (pel1) (Aspergillus oryzae (strain ATCC 42149 / RIB 40) (Yellow koji mold)).